The chain runs to 184 residues: Photosystem I assembly protein Ycf4 (184 aa).

2 helical membrane passes run L22–S42 and I64–I84.

Belongs to the Ycf4 family.

Its subcellular location is the plastid. It is found in the chloroplast thylakoid membrane. Seems to be required for the assembly of the photosystem I complex. This Angiopteris evecta (Mule's foot fern) protein is Photosystem I assembly protein Ycf4.